Here is a 2167-residue protein sequence, read N- to C-terminus: SH3 and multiple ankyrin repeat domains protein 1 (2167 aa).

A disordered region spans residues 1–63 (MTHSPATSED…TRGLQGRSMS (63 aa)). Residues 17-32 (SECPEGGSESDSSPDG) show a composition bias toward low complexity. Gly residues predominate over residues 33–47 (PGRGPQGTRGRGSGA). Residue Arg43 is modified to Omega-N-methylarginine. At Tyr186 the chain carries Phosphotyrosine. 7 ANK repeats span residues 195–210 (VARL…YHDS), 212–245 (SGET…FRAR), 246–278 (DGMT…YKDR), 279–312 (RGLT…IADE), 313–345 (NGWQ…AQNA), 346–378 (SGNT…VKNN), and 379–395 (NGQT…NFEL). 2 disordered regions span residues 413 to 432 (SPKY…TVPP) and 453 to 546 (APGA…SRGR). Residues 453–479 (APGASSSGTPGPTSGPQGQSQPSAPST) show a composition bias toward low complexity. Residues 527–542 (PAGGTGGSGGPGGSLG) show a composition bias toward gly residues. Ser540 carries the phosphoserine modification. Position 544 is an omega-N-methylarginine (Arg544). An SH3 domain is found at 554–613 (VPGRSFMAVKSYQAQGEGEISLSKGEKIKVLSIGEGGFWEGQVKGRVGWFPSDCLEEVAN). 4 positions are modified to phosphoserine: Ser638, Ser641, Ser671, and Ser791. Positions 663–757 (TVLLQKKDSE…TLMVKVVMVT (95 aa)) constitute a PDZ domain. The interval 841-894 (ISASESPGPGGLASLGKHRPKGFFATESSFDPHHRSQPSYDRPSFLPPGPGLML) is disordered. Ser898 is subject to Phosphoserine. Disordered stretches follow at residues 917-1233 (SRSL…LDFT), 1245-1294 (RREG…SIDE), 1308-1417 (GGSS…VLRL), 1429-1725 (RAGL…AGVA), 1740-1787 (GQAF…DPVT), 1842-1866 (KLLP…QPQA), 1898-1988 (PWAR…STRH), and 2002-2029 (RRAP…LPIL). A compositionally biased stretch (pro residues) spans 928-947 (IPPPPTTSPPEPPYSTPPAP). At Arg958 the chain carries Omega-N-methylarginine. Over residues 964–980 (PSSGGPLPASSPSSFDG) the composition is skewed to low complexity. Positions 1004 to 1028 (AHHHPPHHHHHHAPPPQPHHHHAHP) are enriched in basic residues. Residue Arg1059 is modified to Omega-N-methylarginine. The span at 1064–1085 (SPTSGAPSPSHHSSSGGSSGPT) shows a compositional bias: low complexity. Residues Arg1098 and Arg1109 each carry the omega-N-methylarginine modification. 2 stretches are compositionally biased toward low complexity: residues 1132–1146 (SIPS…ALPR) and 1171–1184 (STSS…GSST). The span at 1203–1224 (SPAPATSPVPPSPSPVPTPASP) shows a compositional bias: pro residues. Residues 1245–1256 (RREGGWQNEARR) show a composition bias toward basic and acidic residues. Arg1257 carries the post-translational modification Asymmetric dimethylarginine. At Ser1291 the chain carries Phosphoserine. The segment covering 1363–1372 (ARERALKESS) has biased composition (basic and acidic residues). The span at 1378–1395 (PQPPPRPPSPRYDAPPPT) shows a compositional bias: pro residues. The segment covering 1396–1408 (LHHHSPHSPHSPH) has biased composition (basic residues). Arg1429 bears the Omega-N-methylarginine mark. Ser1442 is modified (phosphoserine). Low complexity-rich tracts occupy residues 1459 to 1469 (PGVGPLLLQLG) and 1530 to 1541 (RRVLPTSPTSPR). Residues 1589–1615 (PLTPGPPHPLPDPPSPATPLPAAPPPA) are compositionally biased toward pro residues. Over residues 1624 to 1641 (DSTASSLTSYDSEVATLT) the composition is skewed to polar residues. Residues 1648–1676 (PGDPPAPGPPAPAAPAPPAPQPGPDPPPG) show a composition bias toward pro residues. The segment covering 1684-1694 (VDSRSSSDHPL) has biased composition (basic and acidic residues). Low complexity predominate over residues 1695-1708 (ETISSASTLSSLSA). Gly residues predominate over residues 1709-1724 (EGGGNTGGVAGGGAGV). Pro residues predominate over residues 1850–1861 (PGPPPPPLPGPL). Arg1901 is modified (omega-N-methylarginine). 3 stretches are compositionally biased toward low complexity: residues 1934–1945 (SQTSLLSKPSSS), 1960–1985 (TGSG…ASAS), and 2002–2012 (RRAPSPSLLPA). An omega-N-methylarginine mark is found at Arg2022, Arg2042, and Arg2080. One can recognise an SAM domain in the interval 2104 to 2167 (WTKFDVADWL…DRALKFFLER (64 aa)).

This sequence belongs to the SHANK family. May homomultimerize via its SAM domain. Interacts with the C-terminus of SSTR2 via the PDZ domain. Interacts with SHARPIN, SPTAN1 and DLGAP1/GKAP. Part of a complex with DLG4/PSD-95 and DLGAP1/GKAP. Interacts with BAIAP2. Interacts with IGSF9. Interacts with HOMER1 and HOMER3. As to expression, expressed only in brain (neuropil of cortex, CA1 region hippocampus and molecular layer of cerebellum).

The protein resides in the cytoplasm. It is found in the synapse. Its subcellular location is the postsynaptic density. Its function is as follows. Seems to be an adapter protein in the postsynaptic density (PSD) of excitatory synapses that interconnects receptors of the postsynaptic membrane including NMDA-type and metabotropic glutamate receptors, and the actin-based cytoskeleton. Plays a role in the structural and functional organization of the dendritic spine and synaptic junction. Overexpression promotes maturation of dendritic spines and the enlargement of spine heads via its ability to recruit Homer to postsynaptic sites, and enhances presynaptic function. In Rattus norvegicus (Rat), this protein is SH3 and multiple ankyrin repeat domains protein 1 (Shank1).